Consider the following 485-residue polypeptide: Glutamyl-tRNA(Gln) amidotransferase subunit A (485 aa).

Residues Lys74 and Ser149 each act as charge relay system in the active site. The active-site Acyl-ester intermediate is Ser173.

It belongs to the amidase family. GatA subfamily. In terms of assembly, heterotrimer of A, B and C subunits.

It catalyses the reaction L-glutamyl-tRNA(Gln) + L-glutamine + ATP + H2O = L-glutaminyl-tRNA(Gln) + L-glutamate + ADP + phosphate + H(+). In terms of biological role, allows the formation of correctly charged Gln-tRNA(Gln) through the transamidation of misacylated Glu-tRNA(Gln) in organisms which lack glutaminyl-tRNA synthetase. The reaction takes place in the presence of glutamine and ATP through an activated gamma-phospho-Glu-tRNA(Gln). In Janthinobacterium sp. (strain Marseille) (Minibacterium massiliensis), this protein is Glutamyl-tRNA(Gln) amidotransferase subunit A.